The sequence spans 105 residues: Small ribosomal subunit protein uS10c (105 aa).

It belongs to the universal ribosomal protein uS10 family. As to quaternary structure, part of the 30S ribosomal subunit.

It is found in the plastid. The protein resides in the cyanelle. Functionally, involved in the binding of tRNA to the ribosomes. This is Small ribosomal subunit protein uS10c (rps10) from Cyanophora paradoxa.